The primary structure comprises 104 residues: Large ribosomal subunit protein uL15z (104 aa).

The protein belongs to the universal ribosomal protein uL15 family.

This chain is Large ribosomal subunit protein uL15z (RPL27AA), found in Arabidopsis thaliana (Mouse-ear cress).